The primary structure comprises 380 residues: Cytochrome b (380 aa).

The next 4 helical transmembrane spans lie at 33-53 (FGSL…FLAM), 77-98 (WMIR…FLHI), 113-133 (WNIG…GYVL), and 178-198 (FFTL…LHLL). 2 residues coordinate heme b: histidine 83 and histidine 97. Heme b-binding residues include histidine 182 and histidine 196. Position 201 (histidine 201) interacts with a ubiquinone. 4 helical membrane-spanning segments follow: residues 226-246 (IKDI…TLLS), 288-308 (LGGV…PALH), 320-340 (LSQF…WIGG), and 347-367 (FITI…LLMP).

Belongs to the cytochrome b family. The cytochrome bc1 complex contains 11 subunits: 3 respiratory subunits (MT-CYB, CYC1 and UQCRFS1), 2 core proteins (UQCRC1 and UQCRC2) and 6 low-molecular weight proteins (UQCRH/QCR6, UQCRB/QCR7, UQCRQ/QCR8, UQCR10/QCR9, UQCR11/QCR10 and a cleavage product of UQCRFS1). This cytochrome bc1 complex then forms a dimer. It depends on heme b as a cofactor.

It localises to the mitochondrion inner membrane. Component of the ubiquinol-cytochrome c reductase complex (complex III or cytochrome b-c1 complex) that is part of the mitochondrial respiratory chain. The b-c1 complex mediates electron transfer from ubiquinol to cytochrome c. Contributes to the generation of a proton gradient across the mitochondrial membrane that is then used for ATP synthesis. This chain is Cytochrome b (MT-CYB), found in Pongo pygmaeus (Bornean orangutan).